A 289-amino-acid polypeptide reads, in one-letter code: MSNISAKLVKELRERTGAGMMECKKALVAAAGDIEKAAEEMRISGQAKADKKASRVAAEGVIEVYAADGRAILLEINSETDFVARDETFKKFAQEAVKAAHAANAKTIEEVLAAKTSNGETVEEARKSLIAKIGENIQVRRVKTVEAETLGAYIHGSKIGVVAALEGGDEDLAKDVAMHVAAANPMVVSGDQVPADVVAKEKEIFTAQAKESGKPAEIIEKMIVGRIRKFLDEVALLGQDFVKDPAIKVEKLVKDKGAKVVNFIRLDVGEGIEKKEEDFAAEVMSQIKG.

The segment at T80 to V83 is involved in Mg(2+) ion dislocation from EF-Tu.

The protein belongs to the EF-Ts family.

It is found in the cytoplasm. Associates with the EF-Tu.GDP complex and induces the exchange of GDP to GTP. It remains bound to the aminoacyl-tRNA.EF-Tu.GTP complex up to the GTP hydrolysis stage on the ribosome. In Francisella tularensis subsp. holarctica (strain LVS), this protein is Elongation factor Ts.